A 238-amino-acid polypeptide reads, in one-letter code: Uracil-DNA glycosylase (238 aa).

Aspartate 72 functions as the Proton acceptor in the catalytic mechanism.

This sequence belongs to the uracil-DNA glycosylase (UDG) superfamily. UNG family.

It is found in the cytoplasm. It catalyses the reaction Hydrolyzes single-stranded DNA or mismatched double-stranded DNA and polynucleotides, releasing free uracil.. Excises uracil residues from the DNA which can arise as a result of misincorporation of dUMP residues by DNA polymerase or due to deamination of cytosine. This chain is Uracil-DNA glycosylase, found in Chromobacterium violaceum (strain ATCC 12472 / DSM 30191 / JCM 1249 / CCUG 213 / NBRC 12614 / NCIMB 9131 / NCTC 9757 / MK).